The chain runs to 434 residues: Nicotinate phosphoribosyltransferase (434 aa).

At His242 the chain carries Phosphohistidine; by autocatalysis.

Belongs to the NAPRTase family. Transiently phosphorylated on a His residue during the reaction cycle. Phosphorylation strongly increases the affinity for substrates and increases the rate of nicotinate D-ribonucleotide production. Dephosphorylation regenerates the low-affinity form of the enzyme, leading to product release.

The catalysed reaction is nicotinate + 5-phospho-alpha-D-ribose 1-diphosphate + ATP + H2O = nicotinate beta-D-ribonucleotide + ADP + phosphate + diphosphate. It participates in cofactor biosynthesis; NAD(+) biosynthesis; nicotinate D-ribonucleotide from nicotinate: step 1/1. In terms of biological role, catalyzes the synthesis of beta-nicotinate D-ribonucleotide from nicotinate and 5-phospho-D-ribose 1-phosphate at the expense of ATP. The chain is Nicotinate phosphoribosyltransferase from Mesorhizobium japonicum (strain LMG 29417 / CECT 9101 / MAFF 303099) (Mesorhizobium loti (strain MAFF 303099)).